The sequence spans 427 residues: Probable threonylcarbamoyladenosine tRNA methylthiotransferase (427 aa).

An MTTase N-terminal domain is found at 12-118 (MRVYVEGYGC…AGEILKNYVE (107 aa)). [4Fe-4S] cluster-binding residues include C21, C57, C86, C155, C159, and C162. One can recognise a Radical SAM core domain in the interval 141 to 370 (LKPSLITPLP…DKLRRELSYL (230 aa)). Positions 373–427 (KKYIGKAMKVLVLDEGKGYTDNFKVVKFEGGEVGEFRKVKITDAKTFGLKGELIL) constitute a TRAM domain.

Belongs to the methylthiotransferase family. CDKAL1 subfamily. The cofactor is [4Fe-4S] cluster.

The enzyme catalyses N(6)-L-threonylcarbamoyladenosine(37) in tRNA + (sulfur carrier)-SH + AH2 + 2 S-adenosyl-L-methionine = 2-methylsulfanyl-N(6)-L-threonylcarbamoyladenosine(37) in tRNA + (sulfur carrier)-H + 5'-deoxyadenosine + L-methionine + A + S-adenosyl-L-homocysteine + 2 H(+). In terms of biological role, catalyzes the methylthiolation of N6-threonylcarbamoyladenosine (t(6)A), leading to the formation of 2-methylthio-N6-threonylcarbamoyladenosine (ms(2)t(6)A) at position 37 in tRNAs that read codons beginning with adenine. The chain is Probable threonylcarbamoyladenosine tRNA methylthiotransferase from Methanocaldococcus jannaschii (strain ATCC 43067 / DSM 2661 / JAL-1 / JCM 10045 / NBRC 100440) (Methanococcus jannaschii).